The following is a 263-amino-acid chain: Probable ribosomal RNA small subunit methyltransferase A (263 aa).

S-adenosyl-L-methionine contacts are provided by L12, G37, E58, D83, and N100.

Belongs to the class I-like SAM-binding methyltransferase superfamily. rRNA adenine N(6)-methyltransferase family. RsmA subfamily.

Its subcellular location is the cytoplasm. Functionally, specifically dimethylates two adjacent adenosines in the loop of a conserved hairpin near the 3'-end of 16S rRNA in the 30S particle. May play a critical role in biogenesis of 30S subunits. The protein is Probable ribosomal RNA small subunit methyltransferase A of Methanococcus maripaludis (strain C7 / ATCC BAA-1331).